The chain runs to 239 residues: Ribosomal RNA small subunit methyltransferase G (239 aa).

S-adenosyl-L-methionine contacts are provided by residues G79, F84, 130–131 (AE), and R149.

Belongs to the methyltransferase superfamily. RNA methyltransferase RsmG family.

The protein localises to the cytoplasm. Specifically methylates the N7 position of a guanine in 16S rRNA. This Lactobacillus delbrueckii subsp. bulgaricus (strain ATCC BAA-365 / Lb-18) protein is Ribosomal RNA small subunit methyltransferase G.